Here is a 345-residue protein sequence, read N- to C-terminus: UDP-3-O-acylglucosamine N-acyltransferase (345 aa).

Residue His253 is the Proton acceptor of the active site.

Belongs to the transferase hexapeptide repeat family. LpxD subfamily. Homotrimer.

It catalyses the reaction a UDP-3-O-[(3R)-3-hydroxyacyl]-alpha-D-glucosamine + a (3R)-hydroxyacyl-[ACP] = a UDP-2-N,3-O-bis[(3R)-3-hydroxyacyl]-alpha-D-glucosamine + holo-[ACP] + H(+). Its pathway is bacterial outer membrane biogenesis; LPS lipid A biosynthesis. Functionally, catalyzes the N-acylation of UDP-3-O-acylglucosamine using 3-hydroxyacyl-ACP as the acyl donor. Is involved in the biosynthesis of lipid A, a phosphorylated glycolipid that anchors the lipopolysaccharide to the outer membrane of the cell. This Rickettsia massiliae (strain Mtu5) protein is UDP-3-O-acylglucosamine N-acyltransferase.